Consider the following 219-residue polypeptide: uncharacterized protein (219 aa).

A helical membrane pass occupies residues 28–50; the sequence is IVSSLIAGGYALFVSAFTSYVYT. The stretch at 155-218 forms a coiled coil; the sequence is EILRESLSEI…EEIEKELEFF (64 aa).

It is found in the membrane. This is an uncharacterized protein from Aquifex aeolicus (strain VF5).